Here is a 25-residue protein sequence, read N- to C-terminus: Grammistin Pp 3 (25 aa).

It belongs to the grammistin family. Group 3 subfamily. Exists as aggregates of 3-4 molecules. Expressed by the skin glands.

It is found in the secreted. In terms of biological role, thanks to its abundant amphiphilic alpha-helices, it may integrate into membrane phospholipids, leading to lysis of the membrane. Has hemolytic activity. Has antibacterial activity with a broad spectrum against various species of bacteria including both Gram-positive and Gram-negative groups. Also has ichthyotoxic activity. This is Grammistin Pp 3 from Pogonoperca punctata (Clown grouper).